Reading from the N-terminus, the 810-residue chain is Actin-regulating kinase PRK1 (810 aa).

The region spanning 22-298 (AKIIKYLTSG…CQVLEEVSRL (277 aa)) is the Protein kinase domain. ATP-binding positions include 28–36 (LTSGGFAQV) and K56. Catalysis depends on D158, which acts as the Proton acceptor. Residues S402, S428, and S484 each carry the phosphoserine modification. Disordered stretches follow at residues 552-668 (FTGN…NVNI) and 733-761 (GVLDIKTKSNGKDKSRPPRPPPKPLHLRT). At T553 the chain carries Phosphothreonine. Positions 553–566 (TGNSVNNSRSASFD) are enriched in polar residues. At S556 the chain carries Phosphoserine. A compositionally biased stretch (low complexity) spans 567–588 (NNNVNGNGNNTNRRLVSSSTSS). Composition is skewed to basic and acidic residues over residues 594–612 (SDTKRKEESDKNQRLEKRR) and 622–639 (FDQHERNNSRTGSRDYYR). Positions 645–658 (KKTQASAKTTSKPT) are enriched in low complexity. A compositionally biased stretch (basic and acidic residues) spans 733–748 (GVLDIKTKSNGKDKSR). The interval 743–756 (GKDKSRPPRPPPKP) is interaction with SH3 domain of ABP1.

Belongs to the protein kinase superfamily. Ser/Thr protein kinase family. Interacts with ABP1, which is required for proper actin patch localization.

It is found in the cytoplasm. Its subcellular location is the cytoskeleton. It localises to the actin patch. The catalysed reaction is L-seryl-[protein] + ATP = O-phospho-L-seryl-[protein] + ADP + H(+). It catalyses the reaction L-threonyl-[protein] + ATP = O-phospho-L-threonyl-[protein] + ADP + H(+). Its function is as follows. Protein kinase involved in the regulation of actin cytoskeleton organization and endocytosis. Phosphorylates PAN1 which disrupts the interaction between PAN1 and END3, and between PAN1 and SLA1. Phosphorylates SCD5. Preferentially, phosphorylates substrates on threonine residues in a [L/I/V/M]-x-x-[Q/N/T/S]-x-T-G motif. The chain is Actin-regulating kinase PRK1 (PRK1) from Saccharomyces cerevisiae (strain ATCC 204508 / S288c) (Baker's yeast).